The following is a 160-amino-acid chain: NADH-quinone oxidoreductase subunit B (160 aa).

[4Fe-4S] cluster contacts are provided by Cys-37, Cys-38, Cys-102, and Cys-132.

It belongs to the complex I 20 kDa subunit family. As to quaternary structure, NDH-1 is composed of 14 different subunits. Subunits NuoB, C, D, E, F, and G constitute the peripheral sector of the complex. [4Fe-4S] cluster serves as cofactor.

Its subcellular location is the cell membrane. The enzyme catalyses a quinone + NADH + 5 H(+)(in) = a quinol + NAD(+) + 4 H(+)(out). In terms of biological role, NDH-1 shuttles electrons from NADH, via FMN and iron-sulfur (Fe-S) centers, to quinones in the respiratory chain. Couples the redox reaction to proton translocation (for every two electrons transferred, four hydrogen ions are translocated across the cytoplasmic membrane), and thus conserves the redox energy in a proton gradient. In Polynucleobacter asymbioticus (strain DSM 18221 / CIP 109841 / QLW-P1DMWA-1) (Polynucleobacter necessarius subsp. asymbioticus), this protein is NADH-quinone oxidoreductase subunit B.